We begin with the raw amino-acid sequence, 394 residues long: Elongation factor Tu (394 aa).

One can recognise a tr-type G domain in the interval 10 to 204; sequence KPHINIGTIG…AVDDNIPTPE (195 aa). The segment at 19-26 is G1; sequence GHVDHGKT. 19–26 lines the GTP pocket; that stretch reads GHVDHGKT. Thr26 is a binding site for Mg(2+). The segment at 60-64 is G2; it reads GITIN. The tract at residues 81-84 is G3; sequence DCPG. Residues 81 to 85 and 136 to 139 each bind GTP; these read DCPGH and NKID. The interval 136 to 139 is G4; the sequence is NKID. Residues 174–176 form a G5 region; that stretch reads SAL.

Belongs to the TRAFAC class translation factor GTPase superfamily. Classic translation factor GTPase family. EF-Tu/EF-1A subfamily. Monomer.

It localises to the cytoplasm. It catalyses the reaction GTP + H2O = GDP + phosphate + H(+). GTP hydrolase that promotes the GTP-dependent binding of aminoacyl-tRNA to the A-site of ribosomes during protein biosynthesis. This chain is Elongation factor Tu, found in Chlamydia felis (strain Fe/C-56) (Chlamydophila felis).